Consider the following 179-residue polypeptide: Protein GrpE (179 aa).

The disordered stretch occupies residues 1-29 (MQDQDKYAEQAASIEDPVTAEAASATTPT).

It belongs to the GrpE family. In terms of assembly, homodimer.

The protein resides in the cytoplasm. Functionally, participates actively in the response to hyperosmotic and heat shock by preventing the aggregation of stress-denatured proteins, in association with DnaK and GrpE. It is the nucleotide exchange factor for DnaK and may function as a thermosensor. Unfolded proteins bind initially to DnaJ; upon interaction with the DnaJ-bound protein, DnaK hydrolyzes its bound ATP, resulting in the formation of a stable complex. GrpE releases ADP from DnaK; ATP binding to DnaK triggers the release of the substrate protein, thus completing the reaction cycle. Several rounds of ATP-dependent interactions between DnaJ, DnaK and GrpE are required for fully efficient folding. In Janthinobacterium sp. (strain Marseille) (Minibacterium massiliensis), this protein is Protein GrpE.